The following is a 165-amino-acid chain: Chorismate pyruvate-lyase (165 aa).

4 residues coordinate substrate: Met-35, Arg-77, Leu-115, and Glu-156.

This sequence belongs to the UbiC family. As to quaternary structure, monomer.

The protein resides in the cytoplasm. It catalyses the reaction chorismate = 4-hydroxybenzoate + pyruvate. It functions in the pathway cofactor biosynthesis; ubiquinone biosynthesis. In terms of biological role, removes the pyruvyl group from chorismate, with concomitant aromatization of the ring, to provide 4-hydroxybenzoate (4HB) for the ubiquinone pathway. This Escherichia coli (strain K12 / MC4100 / BW2952) protein is Chorismate pyruvate-lyase.